The chain runs to 288 residues: ATP synthase gamma chain (288 aa).

This sequence belongs to the ATPase gamma chain family. As to quaternary structure, F-type ATPases have 2 components, CF(1) - the catalytic core - and CF(0) - the membrane proton channel. CF(1) has five subunits: alpha(3), beta(3), gamma(1), delta(1), epsilon(1). CF(0) has three main subunits: a, b and c.

The protein resides in the cell membrane. In terms of biological role, produces ATP from ADP in the presence of a proton gradient across the membrane. The gamma chain is believed to be important in regulating ATPase activity and the flow of protons through the CF(0) complex. The polypeptide is ATP synthase gamma chain (Staphylococcus haemolyticus (strain JCSC1435)).